Here is a 106-residue protein sequence, read N- to C-terminus: L-rhamnose mutarotase (106 aa).

Tyr-20 contacts substrate. The Proton donor role is filled by His-24. Substrate contacts are provided by residues Tyr-43 and 78 to 79 (WW).

This sequence belongs to the rhamnose mutarotase family. As to quaternary structure, homodimer.

The protein localises to the cytoplasm. It catalyses the reaction alpha-L-rhamnose = beta-L-rhamnose. The protein operates within carbohydrate metabolism; L-rhamnose metabolism. Involved in the anomeric conversion of L-rhamnose. The sequence is that of L-rhamnose mutarotase from Verminephrobacter eiseniae (strain EF01-2).